We begin with the raw amino-acid sequence, 151 residues long: Small ribosomal subunit protein uS15 (151 aa).

This sequence belongs to the universal ribosomal protein uS15 family.

This is Small ribosomal subunit protein uS15 (RpS13) from Choristoneura parallela (Spotted fireworm moth).